Consider the following 211-residue polypeptide: DNA-directed RNA polymerases I, II, and III subunit RPABC1 (211 aa).

This sequence belongs to the archaeal Rpo5/eukaryotic RPB5 RNA polymerase subunit family. As to quaternary structure, component of the RNA polymerase I (Pol I), RNA polymerase II (Pol II) and RNA polymerase III (Pol III) complexes consisting of at least 13, 12 and 17 subunits, respectively. In RNA Pol II, this subunit is present in 2-fold molar excess over the other subunits.

The protein resides in the nucleus. In terms of biological role, DNA-dependent RNA polymerase catalyzes the transcription of DNA into RNA using the four ribonucleoside triphosphates as substrates. Common component of RNA polymerases I, II and III which synthesize ribosomal RNA precursors, mRNA precursors and many functional non-coding RNAs, and small RNAs, such as 5S rRNA and tRNAs, respectively. Pol II is the central component of the basal RNA polymerase II transcription machinery. Pols are composed of mobile elements that move relative to each other. In Pol II, RPB5 is part of the lower jaw surrounding the central large cleft and thought to grab the incoming DNA template. Seems to be the major component in this process. This is DNA-directed RNA polymerases I, II, and III subunit RPABC1 (rpb-5) from Caenorhabditis elegans.